Reading from the N-terminus, the 185-residue chain is Small ribosomal subunit protein uS5 (185 aa).

The S5 DRBM domain maps to 29 to 92 (LEEKVVKINR…EKAKKQLVRI (64 aa)).

It belongs to the universal ribosomal protein uS5 family. As to quaternary structure, part of the 30S ribosomal subunit. Contacts proteins S4 and S8.

With S4 and S12 plays an important role in translational accuracy. Functionally, located at the back of the 30S subunit body where it stabilizes the conformation of the head with respect to the body. The chain is Small ribosomal subunit protein uS5 from Aster yellows witches'-broom phytoplasma (strain AYWB).